A 459-amino-acid polypeptide reads, in one-letter code: Mitochondrial distribution and morphology protein 34 (459 aa).

The 190-residue stretch at 1–190 (MSFRFNEAVF…LPSLIFNTSQ (190 aa)) folds into the SMP-LTD domain. The segment covering 338–347 (RSNSNDDNAK) has biased composition (basic and acidic residues). Positions 338–375 (RSNSNDDNAKPRRRKIKCKKTRTPSNLQSQGEQAVDDS) are disordered. The span at 348-359 (PRRRKIKCKKTR) shows a compositional bias: basic residues.

This sequence belongs to the MDM34 family. In terms of assembly, component of the ER-mitochondria encounter structure (ERMES) or MDM complex, composed of MMM1, MDM10, MDM12 and MDM34. Ubiquitinated by a SCF (SKP1-CUL1-F-box protein) E3 ubiquitin-protein ligase complex containing the F-box protein MDM30. Ubiquitination is important for mitochondrial integrity.

Its subcellular location is the mitochondrion outer membrane. Its function is as follows. Component of the ERMES/MDM complex, which serves as a molecular tether to connect the endoplasmic reticulum (ER) and mitochondria. Components of this complex are involved in the control of mitochondrial shape and protein biogenesis, and function in nonvesicular lipid trafficking between the ER and mitochondria. MDM34 is required for the interaction of the ER-resident membrane protein MMM1 and the outer mitochondrial membrane-resident beta-barrel protein MDM10. The polypeptide is Mitochondrial distribution and morphology protein 34 (Saccharomyces cerevisiae (strain RM11-1a) (Baker's yeast)).